Here is a 223-residue protein sequence, read N- to C-terminus: UPF0502 protein Avin_04790 (223 aa).

This sequence belongs to the UPF0502 family.

In Azotobacter vinelandii (strain DJ / ATCC BAA-1303), this protein is UPF0502 protein Avin_04790.